The primary structure comprises 121 residues: Non-structural protein 8 (121 aa).

A signal peptide spans 1–15; sequence MKLLIVFGLLTSVYC. The SARS ORF8 Ig-like domain maps to 19–121; that stretch reads ECSIQECCEN…HDVRVVLDFV (103 aa). 3 disulfide bridges follow: cysteine 25-cysteine 90, cysteine 37-cysteine 102, and cysteine 61-cysteine 83.

The chain is Non-structural protein 8 from Bat coronavirus Rp3/2004 (BtCoV/Rp3/2004).